The following is a 686-amino-acid chain: Chromatin modification-related protein EAF1 (686 aa).

Residues 71–97 (QMKRRQNDHHNQGPPPKVQKSTVDSLK) form a disordered region. Residues 202–280 (FKFIRKSKKK…DKSIIRNLPV (79 aa)) enclose the HSA domain. One can recognise a Myb-like domain in the interval 354-418 (IPTIWLPEDD…FERYIQLNDK (65 aa)). Disordered stretches follow at residues 493 to 517 (RKST…RIPT), 544 to 617 (ARMV…QQRR), and 657 to 686 (QQGY…PNNA). Residues 497–506 (AELQANQNVT) show a composition bias toward polar residues. The span at 554–568 (APAPAPAPPPPPPPK) shows a compositional bias: pro residues. Positions 574-588 (TTPNGTPLTNEQIQH) are enriched in polar residues. Residues 599–613 (LQQQQQQQQQQQHQQ) show a composition bias toward low complexity. The segment covering 671 to 686 (QKNQTASPMSGSPNNA) has biased composition (polar residues).

Belongs to the EAF1 family. Component of the NuA4 histone acetyltransferase complex.

The protein resides in the nucleus. Functionally, component of the NuA4 histone acetyltransferase complex which is involved in transcriptional activation of selected genes principally by acetylation of nucleosomal histone H4 and H2A. The NuA4 complex is also involved in DNA repair. The protein is Chromatin modification-related protein EAF1 (VID21) of Candida albicans (strain SC5314 / ATCC MYA-2876) (Yeast).